A 347-amino-acid chain; its full sequence is Homeobox protein knotted-1-like 9 (347 aa).

The span at 1 to 17 shows a compositional bias: low complexity; the sequence is MESFASLAGGGSSSTTA. Disordered stretches follow at residues 1–36, 122–145, and 179–206; these read MESF…PPPL, QQLD…DVPD, and DSNC…DPSD. Positions 22–36 are enriched in pro residues; sequence LIPPENPDRISPPPL. The segment covering 188–203 has biased composition (acidic residues); it reads SEEEQDTSCPEAEEID. The ELK domain occupies 208-228; sequence QLKHQLLMKYGGSLGDLRQAF. The homeobox; TALE-type DNA-binding region spans 229-293; the sequence is SKRTKKGKLP…NQRKRHWKPT (65 aa).

This sequence belongs to the TALE/KNOX homeobox family.

The protein localises to the nucleus. The sequence is that of Homeobox protein knotted-1-like 9 from Oryza sativa subsp. japonica (Rice).